Consider the following 224-residue polypeptide: Deoxyribose-phosphate aldolase (224 aa).

The Proton donor/acceptor role is filled by aspartate 92. Residue lysine 154 is the Schiff-base intermediate with acetaldehyde of the active site. Catalysis depends on lysine 183, which acts as the Proton donor/acceptor.

The protein belongs to the DeoC/FbaB aldolase family. DeoC type 1 subfamily.

The protein resides in the cytoplasm. It catalyses the reaction 2-deoxy-D-ribose 5-phosphate = D-glyceraldehyde 3-phosphate + acetaldehyde. It participates in carbohydrate degradation; 2-deoxy-D-ribose 1-phosphate degradation; D-glyceraldehyde 3-phosphate and acetaldehyde from 2-deoxy-alpha-D-ribose 1-phosphate: step 2/2. Catalyzes a reversible aldol reaction between acetaldehyde and D-glyceraldehyde 3-phosphate to generate 2-deoxy-D-ribose 5-phosphate. The protein is Deoxyribose-phosphate aldolase of Actinobacillus succinogenes (strain ATCC 55618 / DSM 22257 / CCUG 43843 / 130Z).